Consider the following 407-residue polypeptide: Biflaviolin synthase CYP158A1 (407 aa).

Over residues 1 to 11 (MTQETTTLTGQ) the composition is skewed to polar residues. Positions 1-20 (MTQETTTLTGQSPPPVRDWP) are disordered. Flaviolin is bound by residues arginine 92, tyrosine 199, and 290–291 (HR). A heme-binding site is contributed by cysteine 356.

The protein belongs to the cytochrome P450 family. Heme is required as a cofactor.

The catalysed reaction is 2 flaviolin + 2 reduced [2Fe-2S]-[ferredoxin] + O2 + H(+) = 3,3'-biflaviolin + 2 oxidized [2Fe-2S]-[ferredoxin] + 2 H2O. It catalyses the reaction 2 flaviolin + 2 reduced [2Fe-2S]-[ferredoxin] + O2 + H(+) = 3,8'-biflaviolin + 2 oxidized [2Fe-2S]-[ferredoxin] + 2 H2O. Its pathway is pigment biosynthesis. In terms of biological role, catalyzes oxidative C-C coupling reaction to polymerize flaviolin and form highly conjugated pigments which protect the soil bacterium from deleterious effects of UV irradiation (two isomers of biflaviolin and one triflaviolin). The sequence is that of Biflaviolin synthase CYP158A1 from Streptomyces coelicolor (strain ATCC BAA-471 / A3(2) / M145).